Reading from the N-terminus, the 525-residue chain is Zwittermicin A synthase ZmaJ (525 aa).

This sequence belongs to the ATP-dependent AMP-binding enzyme family.

The enzyme catalyses holo-[peptidyl-carrier protein] + L-serine + ATP = L-seryl-[peptidyl-carrier protein] + AMP + diphosphate. It participates in antibiotic biosynthesis. In terms of biological role, involved in the biosynthesis of the linear aminopolyol antibiotic zwittermicin A (ZmA). Specifically adenylates L-serine and loads it onto the holo form of ZmaH via a thioester linkage to the phosphopanthetheine moiety. This chain is Zwittermicin A synthase ZmaJ, found in Bacillus cereus.